A 419-amino-acid chain; its full sequence is WD repeat-containing protein JIP5 (419 aa).

WD repeat units follow at residues 4 to 45, 66 to 105, 108 to 147, 180 to 220, 224 to 263, 268 to 308, and 351 to 390; these read ALSS…HNQS, PSHK…VKAR, RAHE…EGDA, DQED…KGVE, DQED…LDHA, GHPS…GIVG, and DAAE…QPPP. Positions 172 to 192 are disordered; that stretch reads DPPRSKKKDQEDDLKRKRDEE. The disordered stretch occupies residues 372–408; that stretch reads SADGSDESAGESDVMQPPPATKRRTAKSKAGKKSVHD. The span at 392-404 shows a compositional bias: basic residues; sequence TKRRTAKSKAGKK.

It belongs to the WD repeat WDR55 family.

It localises to the nucleus. It is found in the nucleolus. This chain is WD repeat-containing protein JIP5 (JIP5), found in Malassezia globosa (strain ATCC MYA-4612 / CBS 7966) (Dandruff-associated fungus).